The primary structure comprises 301 residues: NAD kinase 2 (301 aa).

Asp-77 functions as the Proton acceptor in the catalytic mechanism. NAD(+) is bound by residues 77–78, Arg-82, 151–152, Arg-162, Asp-181, and 192–197; these read DG, NE, and TAYAFS.

The protein belongs to the NAD kinase family. Requires a divalent metal cation as cofactor.

The protein resides in the cytoplasm. The catalysed reaction is NAD(+) + ATP = ADP + NADP(+) + H(+). In terms of biological role, involved in the regulation of the intracellular balance of NAD and NADP, and is a key enzyme in the biosynthesis of NADP. Catalyzes specifically the phosphorylation on 2'-hydroxyl of the adenosine moiety of NAD to yield NADP. The chain is NAD kinase 2 from Streptomyces avermitilis (strain ATCC 31267 / DSM 46492 / JCM 5070 / NBRC 14893 / NCIMB 12804 / NRRL 8165 / MA-4680).